Consider the following 220-residue polypeptide: Deoxyribose-phosphate aldolase 1 (220 aa).

Asp-89 (proton donor/acceptor) is an active-site residue. Lys-151 serves as the catalytic Schiff-base intermediate with acetaldehyde. The Proton donor/acceptor role is filled by Lys-180.

The protein belongs to the DeoC/FbaB aldolase family. DeoC type 1 subfamily.

It is found in the cytoplasm. It catalyses the reaction 2-deoxy-D-ribose 5-phosphate = D-glyceraldehyde 3-phosphate + acetaldehyde. It participates in carbohydrate degradation; 2-deoxy-D-ribose 1-phosphate degradation; D-glyceraldehyde 3-phosphate and acetaldehyde from 2-deoxy-alpha-D-ribose 1-phosphate: step 2/2. Its function is as follows. Catalyzes a reversible aldol reaction between acetaldehyde and D-glyceraldehyde 3-phosphate to generate 2-deoxy-D-ribose 5-phosphate. The chain is Deoxyribose-phosphate aldolase 1 from Staphylococcus aureus (strain COL).